The following is a 214-amino-acid chain: Dual specificity phosphatase 29 (214 aa).

Positions 46–194 (HVNEVWPNLY…LRELDIELAL (149 aa)) constitute a Tyrosine-protein phosphatase domain. A substrate-binding site is contributed by 138–145 (HCAMGRSR). The active-site Phosphocysteine intermediate is the Cys139.

It belongs to the protein-tyrosine phosphatase family. Non-receptor class dual specificity subfamily.

It localises to the cytoplasm. Its subcellular location is the nucleus. The catalysed reaction is O-phospho-L-tyrosyl-[protein] + H2O = L-tyrosyl-[protein] + phosphate. It carries out the reaction O-phospho-L-seryl-[protein] + H2O = L-seryl-[protein] + phosphate. It catalyses the reaction O-phospho-L-threonyl-[protein] + H2O = L-threonyl-[protein] + phosphate. In terms of biological role, dual specificity phosphatase able to dephosphorylate phosphotyrosine, phosphoserine and phosphothreonine residues within the same substrate, with a preference for phosphotyrosine as a substrate. Involved in the modulation of AMPK and MAPK1/2 signaling pathways. The sequence is that of Dual specificity phosphatase 29 (DUSP29) from Gallus gallus (Chicken).